The following is a 151-amino-acid chain: Centrin-A (151 aa).

2 consecutive EF-hand domains span residues 80-115 (DVYASFEQAFSLFDRDGSGYITFDDLKTVAINLGEA) and 116-151 (RSDSKLYNMIKRADLNGDKKISKIEFIQLLYWKKIY). 10 residues coordinate Ca(2+): D93, D95, S97, Y99, D104, D129, N131, D133, K135, and E140.

This sequence belongs to the centrin family.

The protein resides in the cytoplasm. The protein localises to the cytoskeleton. Its subcellular location is the microtubule organizing center. It is found in the centrosome. It localises to the nucleus. Plays a fundamental role in microtubule-organizing center structure and function. The protein is Centrin-A (cenA) of Dictyostelium discoideum (Social amoeba).